Consider the following 185-residue polypeptide: Ribosome-recycling factor (185 aa).

It belongs to the RRF family.

The protein localises to the cytoplasm. Its function is as follows. Responsible for the release of ribosomes from messenger RNA at the termination of protein biosynthesis. May increase the efficiency of translation by recycling ribosomes from one round of translation to another. In Geobacillus sp. (strain WCH70), this protein is Ribosome-recycling factor.